A 262-amino-acid chain; its full sequence is Acyl-[acyl-carrier-protein]--UDP-N-acetylglucosamine O-acyltransferase (262 aa).

It belongs to the transferase hexapeptide repeat family. LpxA subfamily. Homotrimer.

Its subcellular location is the cytoplasm. The enzyme catalyses a (3R)-hydroxyacyl-[ACP] + UDP-N-acetyl-alpha-D-glucosamine = a UDP-3-O-[(3R)-3-hydroxyacyl]-N-acetyl-alpha-D-glucosamine + holo-[ACP]. Its pathway is glycolipid biosynthesis; lipid IV(A) biosynthesis; lipid IV(A) from (3R)-3-hydroxytetradecanoyl-[acyl-carrier-protein] and UDP-N-acetyl-alpha-D-glucosamine: step 1/6. In terms of biological role, involved in the biosynthesis of lipid A, a phosphorylated glycolipid that anchors the lipopolysaccharide to the outer membrane of the cell. The polypeptide is Acyl-[acyl-carrier-protein]--UDP-N-acetylglucosamine O-acyltransferase (Escherichia coli O157:H7).